The primary structure comprises 566 residues: Chondroitin sulfate proteoglycan 5 (566 aa).

The N-terminal stretch at 1–30 (MGRAGGGGPDWGPPPVLLLLGVTLVLTAGA) is a signal peptide. The Extracellular segment spans residues 31–423 (VPARETGSAI…SIITDFQVMC (393 aa)). S38 carries O-linked (Xyl...) (chondroitin sulfate) serine glycosylation. A disordered region spans residues 56-93 (ANDTREEAGLPAAGEDETSWTERGSEMAAVGPGVGPEE). Residue N57 is glycosylated (N-linked (GlcNAc...) asparagine). Residue T76 is glycosylated (O-linked (GalNAc...) threonine). S123 is a glycosylation site (O-linked (Xyl...) (chondroitin sulfate) serine). T132 carries O-linked (GalNAc...) threonine glycosylation. Disordered stretches follow at residues 137 to 173 (DEALGSSTMPPAIPEATETSGPPSPAVHDKPSVGPEL), 218 to 249 (DSEGRGADMGSFPGSPGTSENHPDTEGETPSW), and 263 to 327 (ESDF…PPQH). S143 carries O-linked (GalNAc...) serine glycosylation. O-linked (GalNAc...) threonine glycosylation is found at T144, T153, and T155. S156 and S160 each carry an O-linked (GalNAc...) serine glycan. The span at 163–173 (VHDKPSVGPEL) shows a compositional bias: basic and acidic residues. O-linked (GalNAc...) threonine glycosylation occurs at T235. The tract at residues 265–301 (DFYPTTSFYDDLEEEEEEEEDKDTVGGGDLEDENDLL) is interaction with TNC and TNR. A compositionally biased stretch (acidic residues) spans 274-286 (DDLEEEEEEEEDK). N355 and N367 each carry an N-linked (GlcNAc...) asparagine glycan. The EGF-like domain occupies 371 to 413 (RSVCDLFPSYCHNGGQCYLVENIGAFCRCNTQDYIWHKGMRCE). 3 disulfide bridges follow: C374/C387, C381/C397, and C399/C412. 2 positions are modified to phosphoserine: G394 and F396. A Phosphothreonine modification is found at C397. Residues 424 to 444 (VAVGSAALVLLLLFMMTVFFA) traverse the membrane as a helical segment. The segment at 442–460 (FFAKKLYLLKTENTKLRRT) is interaction with GOPC. The Cytoplasmic segment spans residues 445–566 (KKLYLLKTEN…GVNCLQNNLT (122 aa)). Phosphoserine occurs at positions 467, 475, and 477. T478 carries the post-translational modification Phosphothreonine. Residues S483 and S543 each carry the phosphoserine modification. Residues 531-566 (KEEESFNIQNSMSPKLEGGKGDQDDLGVNCLQNNLT) form a disordered region.

In terms of assembly, binds TNR and probably TNC. Interacts with ERBB3 and GOPC. Interacts with MDK; this interaction is independent of the presence of chondroitin sulfate chains and promotes elongation of oligodendroglial precursor-like cells. N-glycosylated. In terms of processing, O-glycosylated; contains chondroitin sulfate glycans. Part-time proteoglycan, expressed in part as a proteoglycan exhibiting chondroitin sulfate glycans and in part as a non-proteoglycan form. The relative amount of both forms depends on tissues and tissue maturation. In the cerebellum the 2 forms coexist while in the cerebrum the proteoglycan form is predominant. Post-translationally, phosphorylated; in intracellular and extracellular parts. As to expression, expressed in olfactory bulb, hippocampus, brain stem, spinal cord, cerebrum and cerebellum. Expressed by Purkinje cells in the cerebellum (at protein level). Expressed in immature and mature cerebellum (isoform 1, isoform 2 and isoform 3).

The protein resides in the cell membrane. It localises to the synaptic cell membrane. Its subcellular location is the endoplasmic reticulum membrane. It is found in the golgi apparatus membrane. The protein localises to the cell surface. The protein resides in the secreted. May function as a growth and differentiation factor involved in neuritogenesis. May induce ERBB3 activation. The chain is Chondroitin sulfate proteoglycan 5 (Cspg5) from Mus musculus (Mouse).